The chain runs to 496 residues: Pseudooxynicotine dehydrogenase (496 aa).

Residues 1–42 (MTKDGDEGSKSGVSRRKFLGSAAVGVATAGIASQLLTLSAPA) constitute a signal peptide (tat-type signal). FAD-binding residues include Ala-69, Glu-88, Arg-96, Trp-113, Val-285, Ser-461, and Ile-471.

This sequence belongs to the flavin monoamine oxidase family. In terms of assembly, homodimer. FAD serves as cofactor. In terms of processing, predicted to be exported by the Tat system. The position of the signal peptide cleavage has not been experimentally proven.

It is found in the periplasm. It catalyses the reaction pseudooxynicotine + 2 Fe(III)-[cytochrome c] + H2O = 4-oxo-4-(pyridin-3-yl)butanal + methylamine + 2 Fe(II)-[cytochrome c] + 2 H(+). It functions in the pathway alkaloid degradation; nicotine degradation. Strongly inhibited by Na(2)MoO(4) and FeCl(3). Activity is nearly twice as high in the presence of Na(2)WO(4). Functionally, involved in nicotine degradation. Catalyzes the deamination of pseudooxynicotine to 3-succinoylsemialdehyde-pyridine. Functions as a dehydrogenase that uses the c-type cytochrome protein CycN as the physiological electron acceptor. O(2) is a poor electron acceptor. Pnao is oxidized by CycN 230 times faster than O(2) at equivalent oxidant concentrations. The protein is Pseudooxynicotine dehydrogenase of Pseudomonas putida (strain DSM 28022 / S16).